A 118-amino-acid chain; its full sequence is Large ribosomal subunit protein bL19 (118 aa).

It belongs to the bacterial ribosomal protein bL19 family.

In terms of biological role, this protein is located at the 30S-50S ribosomal subunit interface and may play a role in the structure and function of the aminoacyl-tRNA binding site. This Nautilia profundicola (strain ATCC BAA-1463 / DSM 18972 / AmH) protein is Large ribosomal subunit protein bL19.